Here is a 123-residue protein sequence, read N- to C-terminus: Succinate dehydrogenase hydrophobic membrane anchor subunit (123 aa).

The Cytoplasmic segment spans residues 1 to 13; it reads MAETEKMKYGSLN. The helical transmembrane segment at 14–34 threads the bilayer; it reads RFAQAVTGLFLLFFLGVHLYV. Topologically, residues 35–59 are extracellular; that stretch reads AHIDFGHPVAFFSSVINQLHNPWWL. The helical transmembrane segment at 60–81 threads the bilayer; sequence AFFLIFVYIITYHGINGLNHIV. His72 is a heme binding site. Residues 82-91 are Cytoplasmic-facing; sequence ADTSISEKAK. The chain crosses the membrane as a helical span at residues 92–116; the sequence is RNIGIALMVIYVITIIYGTILALLV.

As to quaternary structure, part of an enzyme complex containing four subunits: a flavoprotein, an iron-sulfur protein, plus two membrane-anchoring proteins, SdhC and SdhD. Requires heme as cofactor.

It is found in the cell membrane. It participates in carbohydrate metabolism; tricarboxylic acid cycle. Functionally, membrane-anchoring subunit of succinate dehydrogenase (SDH). The protein is Succinate dehydrogenase hydrophobic membrane anchor subunit (sdhD) of Thermoplasma acidophilum (strain ATCC 25905 / DSM 1728 / JCM 9062 / NBRC 15155 / AMRC-C165).